The primary structure comprises 269 residues: GRF-interacting factor 10 (269 aa).

The segment at 1–71 is disordered; it reads MTAEGEAKNP…GEKDDGACRD (71 aa). Positions 22-43 are enriched in low complexity; that stretch reads QQAAPAPAPAQGEVAQEAAVQG. Residues 47–69 are compositionally biased toward basic and acidic residues; the sequence is EQERDKADREVQGGAGEKDDGAC. One can recognise a QLQ domain in the interval 113–148; sequence AFTAMQLQELEQQSRVYQYMAARVPVPTHLVFPVWK. In terms of domain architecture, WRC spans 179-223; it reads EPEPGRCRRTDGKKWRCWRNTIPNEKYCERHMHRGRKRPVQVFLE. 2 consecutive short sequence motifs (bipartite nuclear localization signal) follow at residues 184-194 and 212-216; these read RCRRTDGKKWR and RGRKR. Residues 217–269 form a disordered region; it reads PVQVFLEDDEPDSASGSKPAAPGKATEGAKKADDKSPSSKKLAVAAPAAVQST. Residues 243 to 253 are compositionally biased toward basic and acidic residues; that stretch reads EGAKKADDKSP.

Belongs to the GRF family. As to quaternary structure, interacts with GIF1. Highly expressed in shoots. Expressed in developing leaves.

It is found in the nucleus. In terms of biological role, involved in the regulation of cell proliferation in developing shoots and leaves. Does not possess transactivation activity. This chain is GRF-interacting factor 10, found in Zea mays (Maize).